Reading from the N-terminus, the 106-residue chain is Large ribosomal subunit protein uL24 (106 aa).

Belongs to the universal ribosomal protein uL24 family. As to quaternary structure, part of the 50S ribosomal subunit.

Its function is as follows. One of two assembly initiator proteins, it binds directly to the 5'-end of the 23S rRNA, where it nucleates assembly of the 50S subunit. In terms of biological role, one of the proteins that surrounds the polypeptide exit tunnel on the outside of the subunit. This chain is Large ribosomal subunit protein uL24, found in Dechloromonas aromatica (strain RCB).